Consider the following 603-residue polypeptide: ATP-dependent lipid A-core flippase (603 aa).

Transmembrane regions (helical) follow at residues 20–40, 79–99, 170–190, and 269–289; these read LGYVKPYIGMFLLSIVGFLIF, LVYAVPLLIILIAAWQGLGSF, VFLFLYLLWMNWKLTLVMLAI, and PMLQLVIYVAMAILMFLVLWL. The 294-residue stretch at 31 to 324 folds into the ABC transmembrane type-1 domain; sequence LLSIVGFLIF…LSEVSSTVQR (294 aa). The ABC transporter domain maps to 356–592; it reads LEVRNLSFRY…NGHYARLHAM (237 aa). 390 to 397 contacts ATP; that stretch reads GRSGSGKS.

The protein belongs to the ABC transporter superfamily. Lipid exporter (TC 3.A.1.106) family. In terms of assembly, homodimer.

The protein localises to the cell inner membrane. It carries out the reaction ATP + H2O + lipid A-core oligosaccharideSide 1 = ADP + phosphate + lipid A-core oligosaccharideSide 2.. In terms of biological role, involved in lipopolysaccharide (LPS) biosynthesis. Translocates lipid A-core from the inner to the outer leaflet of the inner membrane. Transmembrane domains (TMD) form a pore in the inner membrane and the ATP-binding domain (NBD) is responsible for energy generation. In Pseudomonas aeruginosa (strain ATCC 15692 / DSM 22644 / CIP 104116 / JCM 14847 / LMG 12228 / 1C / PRS 101 / PAO1), this protein is ATP-dependent lipid A-core flippase.